A 381-amino-acid chain; its full sequence is Homoserine O-succinyltransferase (381 aa).

Residues 45–360 (NAVLVCHALN…PHGHDAFLLD (316 aa)) enclose the AB hydrolase-1 domain. Catalysis depends on Ser151, which acts as the Nucleophile. Position 221 (Arg221) interacts with substrate. Catalysis depends on residues Asp321 and His354. Position 355 (Asp355) interacts with substrate.

The protein belongs to the AB hydrolase superfamily. MetX family. Homodimer.

It localises to the cytoplasm. The catalysed reaction is L-homoserine + succinyl-CoA = O-succinyl-L-homoserine + CoA. The protein operates within amino-acid biosynthesis; L-methionine biosynthesis via de novo pathway; O-succinyl-L-homoserine from L-homoserine: step 1/1. Functionally, transfers a succinyl group from succinyl-CoA to L-homoserine, forming succinyl-L-homoserine. This Burkholderia ambifaria (strain MC40-6) protein is Homoserine O-succinyltransferase.